A 969-amino-acid polypeptide reads, in one-letter code: Poly(ADP-ribose) glycohydrolase (969 aa).

3 disordered regions span residues 1 to 149 (MSAG…QQQT), 161 to 341 (HAEQ…CQAR), and 368 to 400 (NNAG…GKRD). An A-domain region spans residues 1 to 449 (MSAGPGWEPC…LPPEKKWLGT (449 aa)). Residues 10–16 (CTKRPRW) carry the Nuclear localization signal motif. A compositionally biased stretch (polar residues) spans 69 to 84 (NATSFVFKQKTITTWM). The PIP-box (PCNA interacting peptide) motif lies at 77 to 84 (QKTITTWM). Residues 87-100 (KGPKTAESESKENN) are compositionally biased toward basic and acidic residues. Polar residues predominate over residues 101 to 113 (NTRIDSMMSSVQK). A compositionally biased stretch (basic and acidic residues) spans 116–125 (FYPHKVEKLE). Polar residues-rich tracts occupy residues 128–149 (PQLN…QQQT) and 179–189 (QLSNANIGQSP). Position 135 is a phosphoserine (S135). T137 bears the Phosphothreonine mark. Positions 190 to 205 (HTDDHSDTDHEEDRDN) are enriched in basic and acidic residues. S195 is subject to Phosphoserine. T197 carries the post-translational modification Phosphothreonine. Residues 226–237 (ARSNCKCSGSRQ) are compositionally biased toward polar residues. S256, S259, S281, S286, S293, S297, and S311 each carry phosphoserine. The segment covering 275–284 (KLTGQESSLG) has biased composition (polar residues). Acidic residues predominate over residues 311–325 (SEADEETSPVFDEQD). Polar residues-rich tracts occupy residues 329–339 (SQTANKLSSCQ) and 369–387 (NAGT…SSLN). At K334 the chain carries N6-acetyllysine. The interval 603–788 (QPIPLLKQKM…TEQYSEYTGY (186 aa)) is catalytic. Residue 719-720 (IE) participates in substrate binding. D730 is an active-site residue. Positions 733 and 747 each coordinate substrate. Catalysis depends on residues E748 and E749. Substrate is bound by residues Y788 and 862–867 (NWGCGA).

Belongs to the poly(ADP-ribose) glycohydrolase family. In terms of assembly, interacts with PCNA. Interacts with NUDT5.

It is found in the nucleus. The enzyme catalyses [(1''-&gt;2')-ADP-alpha-D-ribose](n) + H2O = [(1''-&gt;2')-ADP-alpha-D-ribose](n-1) + ADP-D-ribose. Poly(ADP-ribose) glycohydrolase that degrades poly(ADP-ribose) by hydrolyzing the ribose-ribose bonds present in poly(ADP-ribose). PARG acts both as an endo- and exoglycosidase, releasing poly(ADP-ribose) of different length as well as ADP-ribose monomers. It is however unable to cleave the ester bond between the terminal ADP-ribose and ADP-ribosylated residues, leaving proteins that are mono-ADP-ribosylated. Poly(ADP-ribose) is synthesized after DNA damage is only present transiently and is rapidly degraded by PARG. Required to prevent detrimental accumulation of poly(ADP-ribose) upon prolonged replicative stress, while it is not required for recovery from transient replicative stress. Responsible for the prevalence of mono-ADP-ribosylated proteins in cells, thanks to its ability to degrade poly(ADP-ribose) without cleaving the terminal protein-ribose bond. Required for retinoid acid-dependent gene transactivation, probably by removing poly(ADP-ribose) from histone demethylase KDM4D, allowing chromatin derepression at RAR-dependent gene promoters. Involved in the synthesis of ATP in the nucleus, together with PARP1, NMNAT1 and NUDT5. Nuclear ATP generation is required for extensive chromatin remodeling events that are energy-consuming. This is Poly(ADP-ribose) glycohydrolase from Mus musculus (Mouse).